We begin with the raw amino-acid sequence, 317 residues long: Protein-L-isoaspartate O-methyltransferase (317 aa).

Ser-59 is an active-site residue.

The protein belongs to the methyltransferase superfamily. L-isoaspartyl/D-aspartyl protein methyltransferase family. As to quaternary structure, monomer.

The protein resides in the cytoplasm. It carries out the reaction [protein]-L-isoaspartate + S-adenosyl-L-methionine = [protein]-L-isoaspartate alpha-methyl ester + S-adenosyl-L-homocysteine. Functionally, catalyzes the methyl esterification of L-isoaspartyl residues in peptides and proteins that result from spontaneous decomposition of normal L-aspartyl and L-asparaginyl residues. It plays a role in the repair and/or degradation of damaged proteins. The protein is Protein-L-isoaspartate O-methyltransferase (pcm) of Thermotoga maritima (strain ATCC 43589 / DSM 3109 / JCM 10099 / NBRC 100826 / MSB8).